Here is a 104-residue protein sequence, read N- to C-terminus: L-rhamnose mutarotase (104 aa).

Tyr18 contributes to the substrate binding site. Catalysis depends on His22, which acts as the Proton donor. Residues Tyr41 and 76–77 (WW) contribute to the substrate site.

This sequence belongs to the rhamnose mutarotase family. As to quaternary structure, homodimer.

Its subcellular location is the cytoplasm. It carries out the reaction alpha-L-rhamnose = beta-L-rhamnose. Its pathway is carbohydrate metabolism; L-rhamnose metabolism. Functionally, involved in the anomeric conversion of L-rhamnose. The polypeptide is L-rhamnose mutarotase (Shigella dysenteriae serotype 1 (strain Sd197)).